A 42-amino-acid chain; its full sequence is Delta-actinopoditoxin-Mb1a (42 aa).

4 cysteine pairs are disulfide-bonded: Cys-1–Cys-15, Cys-8–Cys-20, Cys-14–Cys-31, and Cys-16–Cys-42.

It belongs to the neurotoxin 06 (delta-actx) family. As to expression, expressed by the venom gland.

The protein resides in the secreted. Its function is as follows. Neurotoxin that slows the inactivation of vertebrate tetrodotoxin-sensitive voltage-gated sodium channels (Nav) and most likely insect sodium channels presumably by binding to site 3 of the channel. Effects are an increase in resting tension, a muscle fasciculation and a decrease in indirect twitch tension. It fails to affect tetrodotoxin-resistant sodium currents. In vivo, is lethal to both vertebrates and insects. This is Delta-actinopoditoxin-Mb1a from Missulena bradleyi (Eastern mouse spider).